A 259-amino-acid polypeptide reads, in one-letter code: Cytochrome c oxidase subunit 3 (259 aa).

7 consecutive transmembrane segments (helical) span residues 13-33 (PWPL…ASWF), 36-56 (HGFL…IQWW), 80-100 (GMIL…WAFF), 125-145 (FSVP…VTWA), 160-180 (ALIL…GEYM), 195-215 (FFVA…FLAI), and 237-257 (AWYW…IYWW).

This sequence belongs to the cytochrome c oxidase subunit 3 family. Component of the cytochrome c oxidase (complex IV, CIV), a multisubunit enzyme composed of a catalytic core of 3 subunits and several supernumerary subunits. The complex exists as a monomer or a dimer and forms supercomplexes (SCs) in the inner mitochondrial membrane with ubiquinol-cytochrome c oxidoreductase (cytochrome b-c1 complex, complex III, CIII).

It is found in the mitochondrion inner membrane. The enzyme catalyses 4 Fe(II)-[cytochrome c] + O2 + 8 H(+)(in) = 4 Fe(III)-[cytochrome c] + 2 H2O + 4 H(+)(out). Component of the cytochrome c oxidase, the last enzyme in the mitochondrial electron transport chain which drives oxidative phosphorylation. The respiratory chain contains 3 multisubunit complexes succinate dehydrogenase (complex II, CII), ubiquinol-cytochrome c oxidoreductase (cytochrome b-c1 complex, complex III, CIII) and cytochrome c oxidase (complex IV, CIV), that cooperate to transfer electrons derived from NADH and succinate to molecular oxygen, creating an electrochemical gradient over the inner membrane that drives transmembrane transport and the ATP synthase. Cytochrome c oxidase is the component of the respiratory chain that catalyzes the reduction of oxygen to water. Electrons originating from reduced cytochrome c in the intermembrane space (IMS) are transferred via the dinuclear copper A center (CU(A)) of subunit 2 and heme A of subunit 1 to the active site in subunit 1, a binuclear center (BNC) formed by heme A3 and copper B (CU(B)). The BNC reduces molecular oxygen to 2 water molecules using 4 electrons from cytochrome c in the IMS and 4 protons from the mitochondrial matrix. The protein is Cytochrome c oxidase subunit 3 (COIII) of Lumbricus terrestris (Common earthworm).